A 160-amino-acid polypeptide reads, in one-letter code: Major pollen allergen Bet v 1-J (160 aa).

Brassinolide is bound by residues Lys-55, Tyr-82, Tyr-84, and Asn-101. Hydrophobic ligand pocket regions lie at residues 116 to 118 (KIN) and 133 to 141 (QIKASKEMG).

It belongs to the BetVI family. In terms of tissue distribution, pollen.

It localises to the cytoplasm. Functionally, may be a general steroid carrier protein. This is Major pollen allergen Bet v 1-J from Betula pendula (European white birch).